The chain runs to 271 residues: MVGALCGCWFRLGGARPLIPLGPTVVQTSMSRSQVALLGLSLLLMLLLYVGLPGPPEQTSCLWGDPNVTVLAGLTPGNSPIFYREVLPLNQAHRVEVVLLHGKAFNSHTWEQLGTLQLLSQRGYRAVALDLPGFGNSAPSKEASTEAGRAALLERALRDLEVQNAVLVSPSLSGHYALPFLMRGHHQLHGFVPIAPTSTQNYTQEQFWAVKTPTLILYGELDHILARESLRQLRHLPNHSVVKLRNAGHACYLHKPQDFHLVLLAFLDHLP.

Residues 35-55 (VALLGLSLLLMLLLYVGLPGP) form a helical; Signal-anchor for type II membrane protein membrane-spanning segment. N-linked (GlcNAc...) asparagine glycosylation occurs at asparagine 67. Serine 171 (charge relay system) is an active-site residue. Residue asparagine 201 is glycosylated (N-linked (GlcNAc...) asparagine). Residues aspartate 222 and histidine 249 each act as charge relay system in the active site.

Belongs to the AB hydrolase superfamily. ABHD14 family.

The protein resides in the cytoplasm. It is found in the membrane. Functionally, possible role in granule neuron development. In Homo sapiens (Human), this protein is Protein ABHD14A.